The following is a 368-amino-acid chain: Protein mab-21-like (368 aa).

The protein belongs to the mab-21 family.

The polypeptide is Protein mab-21-like (Drosophila melanogaster (Fruit fly)).